The primary structure comprises 396 residues: MVRGALRGGRPMRGGIRPPFKKTFVPRHPFDLTLAEVFFPKVPSAGAVDDSALTAALLKRNQDLSPTPSEQTAIGNLVTKVQAVLDNLVVAPGDLTTCQLEEVRQVGSFKKGTILTGNNVADVVVILKTLPTKEAVDALAKKVEADLKASMKTEVLTKGDQHTVQIHERGFDIANVHAKVRILIATLPQNLRKLEPEIHLDHKLMQSHLAAIRHTRWFEENAHHSSIKVLIRILKDLTRRFDAFSPLSAWMLDLIAHLAIMNNPSRQALPINLAFRRVFQLLSAGLFLPGSAGITDPTEPGHIRVHTAMTLEQQDVCCYTSQTLLRVLAHGGYKHILGLEGNTSVVREMSVWNGVCISPLTAVYEKPTDKKEGDLEEDIDMIENENEEEGSDDGAE.

The DZF domain occupies 22-379 (KTFVPRHPFD…KKEGDLEEDI (358 aa)). A disordered region spans residues 367–396 (PTDKKEGDLEEDIDMIENENEEEGSDDGAE). The segment covering 374 to 396 (DLEEDIDMIENENEEEGSDDGAE) has biased composition (acidic residues).

Its subcellular location is the nucleus. Its function is as follows. May regulate transcription of undefined genes. This is Interleukin enhancer-binding factor 2 homolog from Drosophila melanogaster (Fruit fly).